The following is a 103-amino-acid chain: Small integral membrane protein 32 (103 aa).

A helical transmembrane segment spans residues tyrosine 55–cysteine 75.

It localises to the membrane. This chain is Small integral membrane protein 32, found in Homo sapiens (Human).